Consider the following 103-residue polypeptide: Large ribosomal subunit protein uL24 (103 aa).

The protein belongs to the universal ribosomal protein uL24 family. Part of the 50S ribosomal subunit.

Functionally, one of two assembly initiator proteins, it binds directly to the 5'-end of the 23S rRNA, where it nucleates assembly of the 50S subunit. In terms of biological role, one of the proteins that surrounds the polypeptide exit tunnel on the outside of the subunit. In Geobacillus sp. (strain WCH70), this protein is Large ribosomal subunit protein uL24.